The chain runs to 220 residues: MDLAAHIDHTLLKPTATLEEVAKAAEEALEYGFYGLCIPPSYVAWVRARYPHAPFRLVTVVGFPLGYQEKEVKALEAALACARGADEVDMVLHLGRAKAGDLDYLEAEVRAVREAVPQAVLKVILETGYFSPEEIARLAEAAIRGGADFLKTSTGFGPRGASLEDVALLVRVAQGRAQVKAAGGIRDRETALRMLKAGASRLGTSSGVALVAGEGGTLGY.

D89 (proton donor/acceptor) is an active-site residue. The Schiff-base intermediate with acetaldehyde role is filled by K151. The active-site Proton donor/acceptor is K180.

Belongs to the DeoC/FbaB aldolase family. DeoC type 1 subfamily. Homotetramer, in solution and in the crystal structure.

It is found in the cytoplasm. It catalyses the reaction 2-deoxy-D-ribose 5-phosphate = D-glyceraldehyde 3-phosphate + acetaldehyde. It participates in carbohydrate degradation; 2-deoxy-D-ribose 1-phosphate degradation; D-glyceraldehyde 3-phosphate and acetaldehyde from 2-deoxy-alpha-D-ribose 1-phosphate: step 2/2. Its function is as follows. Catalyzes a reversible aldol reaction between acetaldehyde and D-glyceraldehyde 3-phosphate to generate 2-deoxy-D-ribose 5-phosphate. This chain is Deoxyribose-phosphate aldolase, found in Thermus thermophilus (strain ATCC 27634 / DSM 579 / HB8).